The primary structure comprises 288 residues: Diaminopimelate epimerase (288 aa).

2 residues coordinate substrate: Asn14 and Asn67. The Proton donor role is filled by Cys76. Residues 77–78, Asn166, Asn199, and 217–218 each bind substrate; these read GN and ER. Cys226 functions as the Proton acceptor in the catalytic mechanism. Residue 227-228 participates in substrate binding; that stretch reads GT.

Belongs to the diaminopimelate epimerase family. Homodimer.

The protein localises to the cytoplasm. The enzyme catalyses (2S,6S)-2,6-diaminopimelate = meso-2,6-diaminopimelate. It functions in the pathway amino-acid biosynthesis; L-lysine biosynthesis via DAP pathway; DL-2,6-diaminopimelate from LL-2,6-diaminopimelate: step 1/1. Catalyzes the stereoinversion of LL-2,6-diaminopimelate (L,L-DAP) to meso-diaminopimelate (meso-DAP), a precursor of L-lysine and an essential component of the bacterial peptidoglycan. The polypeptide is Diaminopimelate epimerase (Bacillus cereus (strain 03BB102)).